Consider the following 318-residue polypeptide: Sucrose operon repressor (318 aa).

One can recognise an HTH lacI-type domain in the interval 1–56 (MIKLEDVANKAGVSVTTVSRVINRKGYLSDATISKVEKAMQDLHYIPNAAARSLQG). The H-T-H motif DNA-binding region spans 4-23 (LEDVANKAGVSVTTVSRVIN).

Functionally, this protein may control the expression of the genes that are involved in the transport and catabolism of sucrose. The protein is Sucrose operon repressor (sacR) of Lactococcus lactis subsp. lactis (Streptococcus lactis).